The sequence spans 277 residues: Nickel import ATP-binding protein NikE (277 aa).

The ABC transporter domain occupies 14-253 (YRTVSLVGRS…EHPASRALQR (240 aa)). 46–53 (GRSGSGKS) contacts ATP.

Belongs to the ABC transporter superfamily. Nickel importer (TC 3.A.1.5.3) family. As to quaternary structure, the complex is composed of two ATP-binding proteins (NikD and NikE), two transmembrane proteins (NikB and NikC) and a solute-binding protein (NikA).

It localises to the cell inner membrane. The catalysed reaction is Ni(2+)(out) + ATP + H2O = Ni(2+)(in) + ADP + phosphate + H(+). In terms of biological role, part of the ABC transporter complex NikABCDE involved in nickel import. Responsible for energy coupling to the transport system. In Rhodospirillum rubrum (strain ATCC 11170 / ATH 1.1.1 / DSM 467 / LMG 4362 / NCIMB 8255 / S1), this protein is Nickel import ATP-binding protein NikE.